We begin with the raw amino-acid sequence, 336 residues long: Homeobox-leucine zipper protein HAT14 (336 aa).

Disordered regions lie at residues 53-141 and 160-194; these read RSLS…PDSV and SNKR…KLRL. Over residues 64-81 the composition is skewed to basic and acidic residues; the sequence is EDEKKKPAPRAKKSDEFR. The span at 120-129 shows a compositional bias: acidic residues; sequence VEEEEEEEEA. The segment covering 130 to 141 has biased composition (low complexity); that stretch reads VPSMSVSPPDSV. Positions 160 to 173 are enriched in basic and acidic residues; it reads SNKRDIDDEVERSA. The segment at residues 187-246 is a DNA-binding region (homeobox); that stretch reads STRKKLRLSKDQSAFLEDSFKEHSTLNPKQKIALAKQLNLRPRQVEVWFQNRRARTKLKQ. Residues 254 to 275 are leucine-zipper; sequence LKRCCESLTEENRRLQKEVKEL.

The protein belongs to the HD-ZIP homeobox family. Class II subfamily.

Its subcellular location is the nucleus. Functionally, probable transcription factor. In Arabidopsis thaliana (Mouse-ear cress), this protein is Homeobox-leucine zipper protein HAT14 (HAT14).